An 890-amino-acid polypeptide reads, in one-letter code: Protein translocase subunit SecA (890 aa).

ATP is bound by residues Gln85, 103–107 (GEGKT), and Asp491.

This sequence belongs to the SecA family. Monomer and homodimer. Part of the essential Sec protein translocation apparatus which comprises SecA, SecYEG and auxiliary proteins SecDF. Other proteins may also be involved.

The protein localises to the cell membrane. Its subcellular location is the cytoplasm. The enzyme catalyses ATP + H2O + cellular proteinSide 1 = ADP + phosphate + cellular proteinSide 2.. Its function is as follows. Part of the Sec protein translocase complex. Interacts with the SecYEG preprotein conducting channel. Has a central role in coupling the hydrolysis of ATP to the transfer of proteins into and across the cell membrane, serving as an ATP-driven molecular motor driving the stepwise translocation of polypeptide chains across the membrane. In Mycoplasmoides gallisepticum (strain R(low / passage 15 / clone 2)) (Mycoplasma gallisepticum), this protein is Protein translocase subunit SecA.